Consider the following 285-residue polypeptide: Pantothenate synthetase (285 aa).

Residue 30-37 coordinates ATP; sequence MGNLHDGH. His-37 acts as the Proton donor in catalysis. Gln-61 provides a ligand contact to (R)-pantoate. Residue Gln-61 participates in beta-alanine binding. 149–152 provides a ligand contact to ATP; sequence GEKD. Gln-155 contributes to the (R)-pantoate binding site. ATP contacts are provided by residues Ile-178 and 186–189; that span reads FSSR.

This sequence belongs to the pantothenate synthetase family. In terms of assembly, homodimer.

Its subcellular location is the cytoplasm. The enzyme catalyses (R)-pantoate + beta-alanine + ATP = (R)-pantothenate + AMP + diphosphate + H(+). The protein operates within cofactor biosynthesis; (R)-pantothenate biosynthesis; (R)-pantothenate from (R)-pantoate and beta-alanine: step 1/1. Functionally, catalyzes the condensation of pantoate with beta-alanine in an ATP-dependent reaction via a pantoyl-adenylate intermediate. The protein is Pantothenate synthetase of Buchnera aphidicola subsp. Schizaphis graminum (strain Sg).